Reading from the N-terminus, the 244-residue chain is Phosphoadenosine 5'-phosphosulfate reductase (244 aa).

C239 acts as the Nucleophile; cysteine thiosulfonate intermediate in catalysis.

It belongs to the PAPS reductase family. CysH subfamily.

The protein localises to the cytoplasm. It catalyses the reaction [thioredoxin]-disulfide + sulfite + adenosine 3',5'-bisphosphate + 2 H(+) = [thioredoxin]-dithiol + 3'-phosphoadenylyl sulfate. Its pathway is sulfur metabolism; hydrogen sulfide biosynthesis; sulfite from sulfate: step 3/3. Its function is as follows. Catalyzes the formation of sulfite from phosphoadenosine 5'-phosphosulfate (PAPS) using thioredoxin as an electron donor. This is Phosphoadenosine 5'-phosphosulfate reductase from Shigella flexneri.